We begin with the raw amino-acid sequence, 299 residues long: Taste receptor type 2 member 4 (299 aa).

The Extracellular portion of the chain corresponds to 1-9 (MLQLFYFSA). Residues 10 to 30 (IIASVILNFVGIIMNLFIMVV) form a helical membrane-spanning segment. Over 31-46 (NCKTWVKSHRISSSDR) the chain is Cytoplasmic. A helical transmembrane segment spans residues 47–67 (ILFSLGITRFLMLGLFLVNTI). Residues 68 to 81 (FFVSSNTERSVYLS) are Extracellular-facing. The helical transmembrane segment at 82-102 (AFFVLCFMFXDSSSLWFVTLL) threads the bilayer. Residues 103 to 131 (NILYCVKITNFQHSVFLLLKQNISPKIPR) lie on the Cytoplasmic side of the membrane. Residues 132 to 152 (LLLACVLISAFTTCLYITLSQ) traverse the membrane as a helical segment. Residues 153–172 (ASPFPELVTKRNNTSFNTHE) are Extracellular-facing. N-linked (GlcNAc...) asparagine glycosylation is found at Asn164 and Asn165. A helical transmembrane segment spans residues 173–193 (GILSLVVSLVLSSSLQFIINV). Over 194–230 (TSASLLIHSLRRHIQKMQKNATGFWNPQTEAHVGAMK) the chain is Cytoplasmic. The helical transmembrane segment at 231–251 (LMIYFLILYIPYSVATLVQYL) threads the bilayer. At 252 to 262 (PFYVGMDMGTK) the chain is on the extracellular side. Residues 263–283 (AICLIFATLYSPGHSVLIIIT) traverse the membrane as a helical segment. The Cytoplasmic segment spans residues 284–299 (HPKLKTTAKKILCFKK).

This sequence belongs to the G-protein coupled receptor T2R family.

Its subcellular location is the membrane. It localises to the cell projection. The protein resides in the cilium membrane. Its function is as follows. Gustducin-coupled receptor implicated in the perception of bitter compounds in the oral cavity and the gastrointestinal tract. Signals through PLCB2 and the calcium-regulated cation channel TRPM5. In airway epithelial cells, binding of denatonium increases the intracellular calcium ion concentration and stimulates ciliary beat frequency. The polypeptide is Taste receptor type 2 member 4 (TAS2R4) (Pongo pygmaeus (Bornean orangutan)).